The sequence spans 197 residues: Large ribosomal subunit protein bL25 (197 aa).

It belongs to the bacterial ribosomal protein bL25 family. CTC subfamily. As to quaternary structure, part of the 50S ribosomal subunit; part of the 5S rRNA/L5/L18/L25 subcomplex. Contacts the 5S rRNA. Binds to the 5S rRNA independently of L5 and L18.

Functionally, this is one of the proteins that binds to the 5S RNA in the ribosome where it forms part of the central protuberance. In Hydrogenobaculum sp. (strain Y04AAS1), this protein is Large ribosomal subunit protein bL25.